The primary structure comprises 543 residues: Lipoyl synthase, apicoplast (543 aa).

The N-terminal stretch at 1 to 63 (MAYFFDFPTD…LFSLLSASQS (63 aa)) is a signal peptide. [4Fe-4S] cluster contacts are provided by Cys-252, Cys-257, Cys-263, Cys-278, Cys-282, Cys-285, and Ser-493. The 219-residue stretch at 264 to 482 (WNGGTATLIL…QDIAEEMGFK (219 aa)) folds into the Radical SAM core domain.

This sequence belongs to the radical SAM superfamily. Lipoyl synthase family. It depends on [4Fe-4S] cluster as a cofactor.

The protein resides in the plastid. The protein localises to the apicoplast. It carries out the reaction [[Fe-S] cluster scaffold protein carrying a second [4Fe-4S](2+) cluster] + N(6)-octanoyl-L-lysyl-[protein] + 2 oxidized [2Fe-2S]-[ferredoxin] + 2 S-adenosyl-L-methionine + 4 H(+) = [[Fe-S] cluster scaffold protein] + N(6)-[(R)-dihydrolipoyl]-L-lysyl-[protein] + 4 Fe(3+) + 2 hydrogen sulfide + 2 5'-deoxyadenosine + 2 L-methionine + 2 reduced [2Fe-2S]-[ferredoxin]. It participates in protein modification; protein lipoylation via endogenous pathway; protein N(6)-(lipoyl)lysine from octanoyl-[acyl-carrier-protein]: step 2/2. Functionally, catalyzes the radical-mediated insertion of two sulfur atoms into the C-6 and C-8 positions of the octanoyl moiety bound to the lipoyl domains of lipoate-dependent enzymes, thereby converting the octanoylated domains into lipoylated derivatives. This is Lipoyl synthase, apicoplast from Toxoplasma gondii.